We begin with the raw amino-acid sequence, 139 residues long: Translation initiation factor 2 subunit beta (139 aa).

The protein belongs to the eIF-2-beta/eIF-5 family. Heterotrimer composed of an alpha, a beta and a gamma chain.

EIF-2 functions in the early steps of protein synthesis by forming a ternary complex with GTP and initiator tRNA. In Methanococcus aeolicus (strain ATCC BAA-1280 / DSM 17508 / OCM 812 / Nankai-3), this protein is Translation initiation factor 2 subunit beta.